The sequence spans 307 residues: Histone deacetylase HDT1 (307 aa).

Residues 98 to 112 (EDEMDLDSEDEDEEL) show a composition bias toward acidic residues. A disordered region spans residues 98–280 (EDEMDLDSED…KSGGSVPCKP (183 aa)). Positions 119 to 132 (ENGKADEKKQKSQE) are enriched in basic and acidic residues. Positions 151-197 (DDDSDEDETDDSDEDETDDSDEGLSSEEGDDDSSDEDDTSDDEEEDT) are enriched in acidic residues. The span at 198 to 211 (PTPKKPEVGKKRPA) shows a compositional bias: basic and acidic residues. Residues 265–277 (SPKSAPKSGGSVP) are compositionally biased toward low complexity. The C2H2-type; degenerate zinc finger occupies 276–299 (VPCKPCSKSFISETALQAHSRAKM).

Belongs to the histone deacetylase HD2 family. In terms of assembly, multimer. Isolated as a trimer composed of 3 proteins of 39, 42 and 45 kDa, possibly a homotrimer with different phosphorylation status or a heterotrimer with HDT2 and/or HDT3. The N-terminus is blocked. Post-translationally, phosphorylated. Required for enzyme activity.

It localises to the nucleus. Its subcellular location is the nucleolus. With respect to regulation, inhibited by 3-(4-Aroyl-1-methyl-1H-pyrrol-2-yl)-N-hydroxy-2-propenamides. 3-(1-methyl-4-phenylacetyl-1H-pyrrol-2-yl)-N-hydroxy-2-propenamide 1b and 3-[1-methyl-4-(3-phenyl-2-propenoyl)-1H-pyrrol-2-yl]-N-hydroxy-2-propenamide 1c are very potent inhibitors. Functionally, mediates the deacetylation of lysine residues on the N-terminal part of the core histones (H2A, H2B, H3 and H4). Histone deacetylation gives a tag for epigenetic repression and plays an important role in transcriptional regulation, cell cycle progression and developmental events. Able to deacetylate all 4 core histones. The polypeptide is Histone deacetylase HDT1 (HDT1) (Zea mays (Maize)).